The primary structure comprises 325 residues: Beta-ketoacyl-[acyl-carrier-protein] synthase III (325 aa).

Active-site residues include C116 and H252. Positions 253 to 257 are ACP-binding; it reads QANLR. N282 is an active-site residue.

It belongs to the thiolase-like superfamily. FabH family. In terms of assembly, homodimer.

It is found in the cytoplasm. The enzyme catalyses malonyl-[ACP] + acetyl-CoA + H(+) = 3-oxobutanoyl-[ACP] + CO2 + CoA. The protein operates within lipid metabolism; fatty acid biosynthesis. In terms of biological role, catalyzes the condensation reaction of fatty acid synthesis by the addition to an acyl acceptor of two carbons from malonyl-ACP. Catalyzes the first condensation reaction which initiates fatty acid synthesis and may therefore play a role in governing the total rate of fatty acid production. Possesses both acetoacetyl-ACP synthase and acetyl transacylase activities. Its substrate specificity determines the biosynthesis of branched-chain and/or straight-chain of fatty acids. This is Beta-ketoacyl-[acyl-carrier-protein] synthase III from Xanthomonas euvesicatoria pv. vesicatoria (strain 85-10) (Xanthomonas campestris pv. vesicatoria).